Consider the following 254-residue polypeptide: MNIKISEITKELELVGEGGFFGVKDKYGTDEREGVKKLLFKYENRYEKLNAERARVRFLQEYELSYPDYRYICGIDEVGRGPLAGPVIACAVILPKDCEILYINDSKQLSEKKREALYDEIMEKAISVGIGSASHARIEEINILQATYEAMRGAINKLGVVPELLLNDAVTIPKVVIPQVPIIKGDAKSISIAAASIVAKVTRDRLMVEYDTVFPGYGFASNKGYGSADHIKALKELGPSPIHRASFIKNLTSC.

The RNase H type-2 domain occupies 70–254 (RYICGIDEVG…ASFIKNLTSC (185 aa)). The a divalent metal cation site is built by aspartate 76, glutamate 77, and aspartate 168.

This sequence belongs to the RNase HII family. Requires Mn(2+) as cofactor. The cofactor is Mg(2+).

It localises to the cytoplasm. It catalyses the reaction Endonucleolytic cleavage to 5'-phosphomonoester.. Functionally, endonuclease that specifically degrades the RNA of RNA-DNA hybrids. This is Ribonuclease HII from Lachnoclostridium phytofermentans (strain ATCC 700394 / DSM 18823 / ISDg) (Clostridium phytofermentans).